The following is a 1077-amino-acid chain: Bifunctional helicase and thymine dioxygenase JBP2 (1077 aa).

Residues 1–516 (MPMFMDGASQ…PPLCIPFKIA (516 aa)) are thymine dioxygenase. Fe cation contacts are provided by His391, Asp393, and His441. Residue Arg455 participates in 2-oxoglutarate binding. The DNA Helicase stretch occupies residues 517–1075 (KTLSLTQHAA…RNIDTVKSER (559 aa)). The Helicase ATP-binding domain occupies 531 to 706 (SRRIKEGDGC…YRLVGWVDDK (176 aa)). ATP is bound at residue 544 to 551 (LTMGLGKT). The DEAH box motif lies at 657-660 (DEGH). The region spanning 871–1032 (KLTALISILH…QVVPGHDLVD (162 aa)) is the Helicase C-terminal domain.

This sequence in the C-terminal section; belongs to the SNF2/RAD54 helicase family. It in the N-terminal section; belongs to the TET family. JBP2 subfamily. Requires Fe(2+) as cofactor.

It localises to the nucleus. It catalyses the reaction ATP + H2O = ADP + phosphate + H(+). The enzyme catalyses thymine + 2-oxoglutarate + O2 = 5-hydroxymethyluracil + succinate + CO2. Functionally, dioxygenase that catalyzes the first step of DNA base J (beta-d-glucosyl-HOMedU) biosynthesis by converting thymine to 5-hydroxymethyluracil (HOMedU). DNA base J is a hypermodified thymidine residue found in the genome of kinetoplastid parasites, which is localized primarily to repetitive DNA, namely the telomeres, and is implicated in the regulation of antigenic variation. Probably also acts as a DNA helicase. Recognizes and binds specific regions of the genome, hydrolyzes ATP and allows the DNA base J de novo synthesis. Involved in initial synthesis of DNA base J, JBP1 being able to act via the basal level of DNA base J and propagate further synthesis. In contrast to JBP1, it does not specifically bind DNA base J, however it binds chromatin. This Trypanosoma brucei brucei (strain 927/4 GUTat10.1) protein is Bifunctional helicase and thymine dioxygenase JBP2 (JBP2).